We begin with the raw amino-acid sequence, 357 residues long: Dual-specificity RNA methyltransferase RlmN (357 aa).

The active-site Proton acceptor is the Glu-89. Residues 109–340 (EGEKYTVCVS…CTIRESKALD (232 aa)) form the Radical SAM core domain. A disulfide bridge connects residues Cys-116 and Cys-345. [4Fe-4S] cluster contacts are provided by Cys-123, Cys-127, and Cys-130. S-adenosyl-L-methionine contacts are provided by residues 173–174 (GE), Ser-203, 226–228 (SLH), and Asn-302. The active-site S-methylcysteine intermediate is Cys-345.

Belongs to the radical SAM superfamily. RlmN family. Requires [4Fe-4S] cluster as cofactor.

It localises to the cytoplasm. It carries out the reaction adenosine(2503) in 23S rRNA + 2 reduced [2Fe-2S]-[ferredoxin] + 2 S-adenosyl-L-methionine = 2-methyladenosine(2503) in 23S rRNA + 5'-deoxyadenosine + L-methionine + 2 oxidized [2Fe-2S]-[ferredoxin] + S-adenosyl-L-homocysteine. It catalyses the reaction adenosine(37) in tRNA + 2 reduced [2Fe-2S]-[ferredoxin] + 2 S-adenosyl-L-methionine = 2-methyladenosine(37) in tRNA + 5'-deoxyadenosine + L-methionine + 2 oxidized [2Fe-2S]-[ferredoxin] + S-adenosyl-L-homocysteine. Functionally, specifically methylates position 2 of adenine 2503 in 23S rRNA and position 2 of adenine 37 in tRNAs. m2A2503 modification seems to play a crucial role in the proofreading step occurring at the peptidyl transferase center and thus would serve to optimize ribosomal fidelity. This Helicobacter pylori (strain G27) protein is Dual-specificity RNA methyltransferase RlmN.